Consider the following 227-residue polypeptide: Pyridoxal 5'-phosphate synthase subunit PdxT (227 aa).

52–54 serves as a coordination point for L-glutamine; that stretch reads GES. The active-site Nucleophile is the Cys84. L-glutamine is bound by residues Arg118 and 149-150; that span reads IR. Active-site charge relay system residues include His189 and Glu191.

Belongs to the glutaminase PdxT/SNO family. In terms of assembly, in the presence of PdxS, forms a dodecamer of heterodimers. Only shows activity in the heterodimer.

The catalysed reaction is aldehydo-D-ribose 5-phosphate + D-glyceraldehyde 3-phosphate + L-glutamine = pyridoxal 5'-phosphate + L-glutamate + phosphate + 3 H2O + H(+). It carries out the reaction L-glutamine + H2O = L-glutamate + NH4(+). It functions in the pathway cofactor biosynthesis; pyridoxal 5'-phosphate biosynthesis. In terms of biological role, catalyzes the hydrolysis of glutamine to glutamate and ammonia as part of the biosynthesis of pyridoxal 5'-phosphate. The resulting ammonia molecule is channeled to the active site of PdxS. The protein is Pyridoxal 5'-phosphate synthase subunit PdxT of Renibacterium salmoninarum (strain ATCC 33209 / DSM 20767 / JCM 11484 / NBRC 15589 / NCIMB 2235).